Consider the following 276-residue polypeptide: tRNA (guanine-N(7)-)-methyltransferase (276 aa).

A disordered region spans residues 1 to 36; sequence MAAETRNVAGAEAPPPQKRYYRQRAHSNPMADHTLR. Position 2 is an N-acetylalanine (alanine 2). The residue at position 27 (serine 27) is a Phosphoserine; by PKB/AKT1 and RPS6KA3. 7 residues coordinate S-adenosyl-L-homocysteine: glycine 84, glutamate 107, isoleucine 108, arginine 109, asparagine 140, alanine 141, and leucine 160. The S-adenosyl-L-methionine site is built by glycine 84 and glutamate 107. S-adenosyl-L-methionine is bound by residues arginine 109, asparagine 140, alanine 141, and leucine 160. Residue aspartate 163 is part of the active site. Residues 164–172 form an alphaC helix region; it reads PHFKRTKHK. S-adenosyl-L-homocysteine contacts are provided by threonine 238 and glutamate 240. S-adenosyl-L-methionine is bound by residues threonine 238 and glutamate 240. Positions 238–246 are alpha6 helix; that stretch reads TEEGKKVLR.

The protein belongs to the class I-like SAM-binding methyltransferase superfamily. TrmB family. As to quaternary structure, catalytic component of the METTL1-WDR4 complex, composed of METTL1 and WDR4. Phosphorylation at Ser-27 by PKB/AKT1 inactivates its methyltransferase activity via a steric interference mechanism in the active site that locally disrupts the catalytic center. Phosphorylation at Ser-27 does not affect the interaction with WDR4. Ubiquitous.

It is found in the nucleus. It carries out the reaction guanosine(46) in tRNA + S-adenosyl-L-methionine = N(7)-methylguanosine(46) in tRNA + S-adenosyl-L-homocysteine. The enzyme catalyses a guanosine in mRNA + S-adenosyl-L-methionine = an N(7)-methylguanosine in mRNA + S-adenosyl-L-homocysteine. It catalyses the reaction a guanosine in miRNA + S-adenosyl-L-methionine = an N(7)-methylguanosine in miRNA + S-adenosyl-L-homocysteine. It participates in tRNA modification; N(7)-methylguanine-tRNA biosynthesis. In terms of biological role, catalytic component of METTL1-WDR4 methyltransferase complex that mediates the formation of N(7)-methylguanine in a subset of RNA species, such as tRNAs, mRNAs and microRNAs (miRNAs). Catalyzes the formation of N(7)-methylguanine at position 46 (m7G46) in a large subset of tRNAs that contain the 5'-RAGGU-3' motif within the variable loop. M7G46 interacts with C13-G22 in the D-loop to stabilize tRNA tertiary structure and protect tRNAs from decay. Also acts as a methyltransferase for a subset of internal N(7)-methylguanine in mRNAs. Internal N(7)-methylguanine methylation of mRNAs in response to stress promotes their relocalization to stress granules, thereby suppressing their translation. Also methylates a specific subset of miRNAs, such as let-7. N(7)-methylguanine methylation of let-7 miRNA promotes let-7 miRNA processing by disrupting an inhibitory secondary structure within the primary miRNA transcript (pri-miRNA). Acts as a regulator of embryonic stem cell self-renewal and differentiation. This Homo sapiens (Human) protein is tRNA (guanine-N(7)-)-methyltransferase.